We begin with the raw amino-acid sequence, 381 residues long: Putative steryl acetyl hydrolase mug81 (381 aa).

Residues 1-9 (MISLSLLYR) are Cytoplasmic-facing. A helical; Signal-anchor for type II membrane protein membrane pass occupies residues 10–30 (ILTLPIILVGTTILYFTIGTN). At 31 to 381 (FPHDELRHNL…YTFLRETFEE (351 aa)) the chain is on the lumenal side. An Involved in the stabilization of the negatively charged intermediate by the formation of the oxyanion hole motif is present at residues 125–127 (HGG). Asn-193 carries N-linked (GlcNAc...) asparagine glycosylation. Ser-200 is an active-site residue.

It belongs to the 'GDXG' lipolytic enzyme family.

It localises to the cytoplasm. It is found in the endoplasmic reticulum membrane. Required for the deacetylation of acetylated sterols. Has a role in meiosis. The polypeptide is Putative steryl acetyl hydrolase mug81 (mug180) (Schizosaccharomyces pombe (strain 972 / ATCC 24843) (Fission yeast)).